Here is a 298-residue protein sequence, read N- to C-terminus: MSTSIPDVAVHDSPAIAAPLRWVGMDGIVVPVQLTTADGGQHVIGRARAQIDLPAMGVKGIHMSRLYRLLDTYAVEPLTPVGICGLLSAMVNSHADCASTAARVDWYFDWLRRVPALVSNDLSGWRGYPVWLRAEYSAGHVQFWLCVEVAYSSTCPCSAALARQMLADAFLQEHVEVSALSPETVADWLRSNGSYATPHSQRSLARIEVALTEQAVELGLPALVDCAERILSTPVQAAVRRVDEQAFARLNGANLMYVEDATRRLQHGLAIHYSAFRVHVRHLESLHPNDAVASTADE.

It belongs to the GTP cyclohydrolase IV family.

It catalyses the reaction GTP + H2O = 7,8-dihydroneopterin 3'-triphosphate + formate + H(+). It functions in the pathway cofactor biosynthesis; 7,8-dihydroneopterin triphosphate biosynthesis; 7,8-dihydroneopterin triphosphate from GTP: step 1/1. Converts GTP to 7,8-dihydroneopterin triphosphate. The sequence is that of GTP cyclohydrolase FolE2 from Xylella fastidiosa (strain M23).